Consider the following 56-residue polypeptide: Large ribosomal subunit protein bL33 (56 aa).

Belongs to the bacterial ribosomal protein bL33 family.

The polypeptide is Large ribosomal subunit protein bL33 (Orientia tsutsugamushi (strain Ikeda) (Rickettsia tsutsugamushi)).